The primary structure comprises 174 residues: Co-chaperone protein HscB homolog (174 aa).

Positions 2 to 74 (NYFELFKFSP…IRRAEHMLSL (73 aa)) constitute a J domain.

This sequence belongs to the HscB family. Interacts with HscA and stimulates its ATPase activity.

Functionally, co-chaperone involved in the maturation of iron-sulfur cluster-containing proteins. Seems to help targeting proteins to be folded toward HscA. The chain is Co-chaperone protein HscB homolog from Shewanella sp. (strain ANA-3).